A 977-amino-acid polypeptide reads, in one-letter code: Phosphatidylinositol 4-kinase PIK1alpha (977 aa).

The 125-residue stretch at M1–I125 folds into the PIK helical domain. Residues M205–D261 form a disordered region. Residues A220–A233 show a composition bias toward polar residues. The segment covering D250–D261 has biased composition (acidic residues). Residues E679–M960 form the PI3K/PI4K catalytic domain. The segment at K685 to S691 is G-loop. Residues Q826 to N834 form a catalytic loop region. Residues H845–T869 form an activation loop region.

The protein belongs to the PI3/PI4-kinase family. Type III PI4K subfamily.

The protein resides in the nucleus. It carries out the reaction a 1,2-diacyl-sn-glycero-3-phospho-(1D-myo-inositol) + ATP = a 1,2-diacyl-sn-glycero-3-phospho-(1D-myo-inositol 4-phosphate) + ADP + H(+). Acts on phosphatidylinositol (PI) in the first committed step in the production of the second messenger inositol 1,4,5,-trisphosphate. The polypeptide is Phosphatidylinositol 4-kinase PIK1alpha (PIKALPHA) (Candida albicans (strain SC5314 / ATCC MYA-2876) (Yeast)).